The following is a 669-amino-acid chain: MSDGPIQPPKPAVVHEAHEVDTFHVPKAFHDKHPSGTHIKDIEEYKKLYEESIKSPDTFWARMARELLTFDKDFETTHHGSFENGDNAWFVEGRLNASFNCVDRHALKNPDKVAIIYEADEPNEGRKITYGELMREVSRVAWTLKERGVKKGDTVGIYLPMIPEAVIAFLACSRIGAVHSVVFAGFSSDSLRDRVLDASSKVIITSDEGKRGGKIIGTKKIVDEAMKQCPDVHTVLVYKRTGAEVPWTAGRDIWWHEEVEKYPNYLAPESVSSEDPLFLLYTSGSTGKPKGVMHTTAGYLLGAAMTGKYVFDIHDDDRYFCGGDVGWITGHTYVVYAPLLLGCATVVFESTPAYPNFSRYWDVIDKHDVTQFYVAPTALRLLKRAGDEHIHHKMHSLRILGSVGEPIAAEVWKWYFECVGKEEAHICDTYWQTETGSHVITPLGGITPTKPGSASLPFFGIEPAIIDPVSGEEIVGNDVEGVLAFKQPWPSMARTVWGAHKRYMDTYLNVYKGYYFTGDGAGRDHDGYYWIRGRVDDVVNVSGHRLSTAEIEAALLEHPSVAEAAVVGIADELTGQAVNAFVSLKEGKPTEQISKDLAMQVRKSIGPFAAPKAVFVVDDLPKTRSGKIMRRILRKILSGEEDSLGDTSTLSDPSVVDKIIETVHSARQK.

CoA-binding positions include 211 to 214 (RGGK) and Thr-329. Residues 404–406 (GEP), 428–433 (DTYWQT), Asp-519, and Arg-534 contribute to the ATP site. Residue Ser-542 participates in CoA binding. Arg-545 is an ATP binding site. Arg-602 contributes to the CoA binding site.

This sequence belongs to the ATP-dependent AMP-binding enzyme family.

The catalysed reaction is acetate + ATP + CoA = acetyl-CoA + AMP + diphosphate. It functions in the pathway ketone degradation; acetoin degradation. It participates in antibiotic biosynthesis; penicillin biosynthesis. This Penicillium chrysogenum (Penicillium notatum) protein is Acetyl-coenzyme A synthetase (facA).